Here is a 444-residue protein sequence, read N- to C-terminus: MATYTCSVVLASLRCRSSHLVLRKNLCPIYTSVSCAQNRAYAPRSSCLVQAAFVSPSWSSRAFHTSGFCLQDAPPSPPPPSTPPSPPEPEKAPQVVRKSLGQRVVDEIKHFYHGFRLLGIDTKVAARMVWRLLHGQVLTRRERRRLMRTCADLFRLVPFMVFVIVPFMEFLLPVFLKLFPEMLPSTFETESKKEEKVKKKLAAKLEMAKFLQETISEMARRNKAETGADTQQQFSSYVQQVRGTGEQPSTKEIVRFSKLFEDELTLEHLERSQLVALCRLLELPPIGTNNLLRFQLMMQLRSIRADDEMISKEGVENLTVAELQAASRARGMRSLGLTEEQLKEQMKQWLDLHLKENVPPSLLLLSRALYLTELKPKPILPLKQAVEIPKINPAVVEAVEAKDNLADTAPTLKGLKGEELVSGTLLKESAVQSKENTKASANGV.

The transit peptide at 1–24 (MATYTCSVVLASLRCRSSHLVLRK) directs the protein to the mitochondrion. The Mitochondrial intermembrane portion of the chain corresponds to 25–155 (NLCPIYTSVS…LMRTCADLFR (131 aa)). A disordered region spans residues 73-94 (APPSPPPPSTPPSPPEPEKAPQ). Over residues 74–87 (PPSPPPPSTPPSPP) the composition is skewed to pro residues. Residues 156-176 (LVPFMVFVIVPFMEFLLPVFL) traverse the membrane as a helical segment. Residues 177–444 (KLFPEMLPST…ENTKASANGV (268 aa)) are Mitochondrial matrix-facing. Residues 199–417 (KKLAAKLEMA…TAPTLKGLKG (219 aa)) form the Letm1 RBD domain.

The protein localises to the mitochondrion inner membrane. This Xenopus tropicalis (Western clawed frog) protein is LETM1 domain-containing protein LETM2, mitochondrial (letm2).